Consider the following 495-residue polypeptide: UDP-N-acetylmuramate--L-alanine ligase (495 aa).

122–128 (GTHGKTT) is a binding site for ATP.

This sequence belongs to the MurCDEF family.

It is found in the cytoplasm. It catalyses the reaction UDP-N-acetyl-alpha-D-muramate + L-alanine + ATP = UDP-N-acetyl-alpha-D-muramoyl-L-alanine + ADP + phosphate + H(+). Its pathway is cell wall biogenesis; peptidoglycan biosynthesis. Functionally, cell wall formation. The protein is UDP-N-acetylmuramate--L-alanine ligase of Mycobacterium leprae (strain TN).